A 362-amino-acid polypeptide reads, in one-letter code: 11-beta-hydroxysteroid dehydrogenase B (362 aa).

A helical; Signal-anchor for type II membrane protein transmembrane segment spans residues 10-30 (FVVPPASLLMLAFTWPTLFFI). Residues 13–26 (PPASLLMLAFTWPT) carry the Proline-knob motif. Residue 55–81 (GASSGIGEQIAYQYAKRGANLVLVARR) participates in NADP(+) binding. Residue serine 185 participates in substrate binding. Tyrosine 198 acts as the Proton acceptor in catalysis. Residues 198–202 (YSAAK) and lysine 202 each bind NADP(+). The disordered stretch occupies residues 321-362 (TGRPLLETSSPRRSAVMEGSSPRRLPPGPLTFSPAFQQQKSE).

The protein belongs to the short-chain dehydrogenases/reductases (SDR) family. As to expression, expressed in seeds (at protein level). Not expressed in stem, leaf or root (at protein level).

The protein localises to the lipid droplet. Its subcellular location is the membrane. It carries out the reaction an 11beta-hydroxysteroid + NADP(+) = an 11-oxosteroid + NADPH + H(+). The enzyme catalyses corticosterone + NADP(+) = 11-dehydrocorticosterone + NADPH + H(+). It catalyses the reaction 17beta-estradiol + NADP(+) = estrone + NADPH + H(+). Functionally, has dehydrogenase activity against corticosterone (11 beta-hydroxysteroid) and estradiol (17 beta-hydroxysteroid), with similar activities to both sterols in the presence of NADP(+), but negligible activity to either sterol in the presence of NAD(+). May be involved in signal transduction regulated by various sterols. In Sesamum indicum (Oriental sesame), this protein is 11-beta-hydroxysteroid dehydrogenase B.